The sequence spans 488 residues: Probable glycine dehydrogenase (decarboxylating) subunit 2 (488 aa).

At Lys274 the chain carries N6-(pyridoxal phosphate)lysine.

The protein belongs to the GcvP family. C-terminal subunit subfamily. In terms of assembly, the glycine cleavage system is composed of four proteins: P, T, L and H. In this organism, the P 'protein' is a heterodimer of two subunits. It depends on pyridoxal 5'-phosphate as a cofactor.

The enzyme catalyses N(6)-[(R)-lipoyl]-L-lysyl-[glycine-cleavage complex H protein] + glycine + H(+) = N(6)-[(R)-S(8)-aminomethyldihydrolipoyl]-L-lysyl-[glycine-cleavage complex H protein] + CO2. The glycine cleavage system catalyzes the degradation of glycine. The P protein binds the alpha-amino group of glycine through its pyridoxal phosphate cofactor; CO(2) is released and the remaining methylamine moiety is then transferred to the lipoamide cofactor of the H protein. This Listeria monocytogenes serotype 4b (strain F2365) protein is Probable glycine dehydrogenase (decarboxylating) subunit 2.